The sequence spans 172 residues: Large ribosomal subunit protein uL10 (172 aa).

It belongs to the universal ribosomal protein uL10 family. Part of the ribosomal stalk of the 50S ribosomal subunit. The N-terminus interacts with L11 and the large rRNA to form the base of the stalk. The C-terminus forms an elongated spine to which L12 dimers bind in a sequential fashion forming a multimeric L10(L12)X complex.

In terms of biological role, forms part of the ribosomal stalk, playing a central role in the interaction of the ribosome with GTP-bound translation factors. In Methylorubrum extorquens (strain CM4 / NCIMB 13688) (Methylobacterium extorquens), this protein is Large ribosomal subunit protein uL10.